Consider the following 516-residue polypeptide: GMP synthase [glutamine-hydrolyzing] (516 aa).

Positions 8–198 constitute a Glutamine amidotransferase type-1 domain; it reads KILILDFGSQ…VVNICGCDTL (191 aa). Residue cysteine 84 is the Nucleophile of the active site. Catalysis depends on residues histidine 172 and glutamate 174. The GMPS ATP-PPase domain maps to 199-391; the sequence is WNIENIIEND…LGLPYNMLYR (193 aa). Position 226–232 (226–232) interacts with ATP; the sequence is SGGVDSS.

Homodimer.

The catalysed reaction is XMP + L-glutamine + ATP + H2O = GMP + L-glutamate + AMP + diphosphate + 2 H(+). The protein operates within purine metabolism; GMP biosynthesis; GMP from XMP (L-Gln route): step 1/1. In terms of biological role, catalyzes the synthesis of GMP from XMP. The polypeptide is GMP synthase [glutamine-hydrolyzing] (Francisella tularensis subsp. tularensis (strain FSC 198)).